The chain runs to 207 residues: Small ribosomal subunit protein uS4 (207 aa).

Residues 31-51 form a disordered region; the sequence is KCKLDSKPGQHGRTSGARTSD. The S4 RNA-binding domain maps to 97 to 160; it reads SRLDNVVYRM…KKQARIRESL (64 aa).

It belongs to the universal ribosomal protein uS4 family. In terms of assembly, part of the 30S ribosomal subunit. Contacts protein S5. The interaction surface between S4 and S5 is involved in control of translational fidelity.

One of the primary rRNA binding proteins, it binds directly to 16S rRNA where it nucleates assembly of the body of the 30S subunit. Functionally, with S5 and S12 plays an important role in translational accuracy. This is Small ribosomal subunit protein uS4 from Bordetella avium (strain 197N).